The chain runs to 88 residues: Acyl carrier protein (88 aa).

One can recognise a Carrier domain in the interval 4 to 79 (DSVPAKVMEI…AAVDYIQNKM (76 aa)). At S39 the chain carries O-(pantetheine 4'-phosphoryl)serine.

The protein belongs to the acyl carrier protein (ACP) family. In terms of processing, 4'-phosphopantetheine is transferred from CoA to a specific serine of apo-ACP by AcpS. This modification is essential for activity because fatty acids are bound in thioester linkage to the sulfhydryl of the prosthetic group.

The protein resides in the cytoplasm. The protein operates within lipid metabolism; fatty acid biosynthesis. Functionally, carrier of the growing fatty acid chain in fatty acid biosynthesis. The polypeptide is Acyl carrier protein (Trichodesmium erythraeum (strain IMS101)).